Reading from the N-terminus, the 70-residue chain is Potassium channel toxin kappa-KTx 2.5 (70 aa).

The first 26 residues, 1-26 (MESSRKSYVLMLFLAFVIMNVCSVSG), serve as a signal peptide directing secretion. Residues 27–42 (EPKDGEIAGFEMEEAR) constitute a propeptide that is removed on maturation. Intrachain disulfides connect Cys46/Cys64 and Cys50/Cys60.

Belongs to the short scorpion toxin superfamily. Potassium channel inhibitor kappa-KTx family. Kappa-KTx 2 subfamily. As to expression, expressed by the venom gland.

The protein localises to the secreted. Its function is as follows. Voltage-independently blocks potassium currents on hKv1.1/KCNA1 (IC(50)=217 uM), and hKv1.4/KCNA4 (IC(50)=71 uM) (expressed in CHO cells). The sequence is that of Potassium channel toxin kappa-KTx 2.5 from Opisthacanthus cayaporum (South American scorpion).